We begin with the raw amino-acid sequence, 291 residues long: Pyridoxal 5'-phosphate synthase subunit PdxS (291 aa).

D-ribose 5-phosphate is bound at residue Asp-23. The active-site Schiff-base intermediate with D-ribose 5-phosphate is the Lys-80. A D-ribose 5-phosphate-binding site is contributed by Gly-152. Arg-164 contacts D-glyceraldehyde 3-phosphate. D-ribose 5-phosphate is bound by residues Gly-213 and 234 to 235; that span reads GS.

This sequence belongs to the PdxS/SNZ family. As to quaternary structure, in the presence of PdxT, forms a dodecamer of heterodimers.

It carries out the reaction aldehydo-D-ribose 5-phosphate + D-glyceraldehyde 3-phosphate + L-glutamine = pyridoxal 5'-phosphate + L-glutamate + phosphate + 3 H2O + H(+). It functions in the pathway cofactor biosynthesis; pyridoxal 5'-phosphate biosynthesis. Catalyzes the formation of pyridoxal 5'-phosphate from ribose 5-phosphate (RBP), glyceraldehyde 3-phosphate (G3P) and ammonia. The ammonia is provided by the PdxT subunit. Can also use ribulose 5-phosphate and dihydroxyacetone phosphate as substrates, resulting from enzyme-catalyzed isomerization of RBP and G3P, respectively. This Methanocorpusculum labreanum (strain ATCC 43576 / DSM 4855 / Z) protein is Pyridoxal 5'-phosphate synthase subunit PdxS.